A 269-amino-acid chain; its full sequence is Fructose permease IIC component (269 aa).

A PTS EIIC type-4 domain is found at 1-234 (MSSLQIILLL…GALGLCLALL (234 aa)). The next 7 membrane-spanning stretches (helical) occupy residues 2-22 (SSLQIILLLIIAAITGIASVL), 35-54 (TLVGLVLGDLKTGIILGGTL), 64-86 (VGLAMAPDTAIASVISTILVITA), 90-110 (IGEGIAVAVALAAAGQALTIF), 149-169 (VMIPTLIVALISVSAVQAFLG), 181-201 (IGGGIIVVVGYAMVINMMNIP), and 206-226 (FFYIGFLLAAFTDFNLVGFGA).

The protein resides in the cell membrane. Functionally, the phosphoenolpyruvate-dependent sugar phosphotransferase system (PTS), a major carbohydrate active -transport system, catalyzes the phosphorylation of incoming sugar substrates concomitant with their translocation across the cell membrane. This system is involved in fructose transport. The protein is Fructose permease IIC component (levF) of Bacillus subtilis (strain 168).